A 204-amino-acid polypeptide reads, in one-letter code: MKVKICGITDMETAKRACEYGADALGFVFAESKRKITPGLAKEIIQELPANVLKIGVFVNESVEVIQKITENCGLTHVQLHGGEDNHQIRRLNIPSIKSLGVTSESDMKNAQGYETDYILFDSPKEKFHGGNGKTFPWELLAHMPKELREKTILAGGLNTLNIEEAIRTVRPYMVDVSSGVETEGKKDVEKIKQFIIKAKECSK.

It belongs to the TrpF family.

The catalysed reaction is N-(5-phospho-beta-D-ribosyl)anthranilate = 1-(2-carboxyphenylamino)-1-deoxy-D-ribulose 5-phosphate. Its pathway is amino-acid biosynthesis; L-tryptophan biosynthesis; L-tryptophan from chorismate: step 3/5. The polypeptide is N-(5'-phosphoribosyl)anthranilate isomerase (Bacillus thuringiensis (strain Al Hakam)).